The sequence spans 1367 residues: Collagen alpha-1(XV) chain (1367 aa).

The signal sequence occupies residues 1–31 (MTHRRTAQGRRPRWLLSIISALLSAVLQTRA). A Laminin G-like domain is found at 54–249 (SVSFTTGYGG…SSASGEASGF (196 aa)). The nonhelical region 1 (NC1) stretch occupies residues 229-604 (RTPEELCEAQ…DIVGNEDLLR (376 aa)). O-linked (Xyl...) (chondroitin sulfate) serine glycosylation is found at S243 and S247. The interval 267–319 (APPKESHVDPISVPPTSSSPAEDSELSGEPVPEGTPETNLSIIGHSSPEQGSG) is disordered. Residues N305 and N323 are each glycosylated (N-linked (GlcNAc...) asparagine). An O-linked (Xyl...) (chondroitin sulfate) serine glycan is attached at S341. N-linked (GlcNAc...) asparagine glycans are attached at residues N348, N375, and N402. 2 disordered regions span residues 396 to 446 (DTPD…SHGE) and 529 to 784 (TAEP…GHVE). The span at 402–429 (NLTTTASGDGEVPTSTDGDTEADSSPTG) shows a compositional bias: polar residues. The segment covering 434-446 (KPREEATLGSHGE) has biased composition (basic and acidic residues). Residues 555 to 564 (PSGPPLPTPT) show a composition bias toward pro residues. Over residues 582–595 (GPVGGLDEGSGSGD) the composition is skewed to gly residues. Collagen-like domains follow at residues 605–665 (GPPG…GMKG) and 666–717 (EKGA…PPGP). Residues 605–718 (GPPGPPGPPG…PGPPGPPGPG (114 aa)) form a triple-helical region 1 (COL1) region. Pro residues predominate over residues 606–616 (PPGPPGPPGSP). N673 carries an N-linked (GlcNAc...) asparagine glycan. Positions 703–717 (MGPPGPPGPPGPPGP) are enriched in pro residues. Positions 719–748 (CTTELGFEIEGSGDVRLLSKPTISGPTSPS) are nonhelical region 2 (NC2). S730 is a glycosylation site (O-linked (Xyl...) (chondroitin sulfate) serine). Low complexity predominate over residues 737–750 (SKPTISGPTSPSGP). Residues 749–783 (GPKGEKGEQGAKGERGADGTSTMGPPGPRGPPGHV) are triple-helical region 2 (COL2). A compositionally biased stretch (basic and acidic residues) spans 751–765 (KGEKGEQGAKGERGA). Residues 784 to 807 (EVLSSSLINITNGSMNFSDIPELM) form a nonhelical region 3 (NC3) region. Residues N792, N795, and N799 are each glycosylated (N-linked (GlcNAc...) asparagine). Collagen-like domains are found at residues 808 to 850 (GPPG…GEPG) and 863 to 912 (KGRK…GDRG). A triple-helical region 3 (COL3) region spans residues 808 to 852 (GPPGPDGVPGLPGFPGPRGPKGDTGVPGFPGLKGEQGEKGEPGAI). The interval 853–863 (LTGDVPLEMMK) is nonhelical region 4 (NC4). Positions 864–934 (GRKGEPGIHG…PGPPGPPGAV (71 aa)) are triple-helical region 4 (COL4). The tract at residues 905–930 (KGAKGDRGVTLPGPPGLPGPPGPPGP) is disordered. Over residues 916–930 (PGPPGLPGPPGPPGP) the composition is skewed to pro residues. Residues 935–968 (VNIKGAVFPIPARPHCKTPVGTAHPGDPELVTFH) are nonhelical region 5 (NC5). A triple-helical region 5 (COL5) region spans residues 969 to 998 (GVKGEKGSWGLPGSKGEKGDQGAQGPPGPP). Disordered regions lie at residues 974–1000 (KGSW…PPVD) and 1055–1089 (GPPG…PAIL). A nonhelical region 6 (NC6) region spans residues 999 to 1031 (VDPAYLRHFLNSLKGENEDASFRGESSNNLFVS). The interval 1032-1086 (GPPGLPGYPGLVGQKGEAVVGPQGPPGIPGLPGPPGFGRPGVPGPPGPPGPPGPP) is triple-helical region 6 (COL6). The span at 1055 to 1086 (GPPGIPGLPGPPGFGRPGVPGPPGPPGPPGPP) shows a compositional bias: pro residues. Residues 1087–1096 (AILGAAVALP) are nonhelical region 7 (NC7). The interval 1097–1111 (GPPGPPGQPGLPGSR) is triple-helical region 7 (COL7). The tract at residues 1112 to 1367 (NLVTALSDMG…ENSFMTDTRK (256 aa)) is nonhelical region 8 (NC8). Intrachain disulfides connect C1216-C1356 and C1318-C1348.

Belongs to the multiplexin collagen family. Trimer; disulfide-linked. As to quaternary structure, interacts moderately with EFEMP2. Post-translationally, prolines at the third position of the tripeptide repeating unit (G-X-Y) are hydroxylated in some or all of the chains. O-glycosylated; contains chondroitin sulfate. In terms of tissue distribution, detected in testis, brain, heart, kidney, skeletal muscle and skin (at protein level). Detected in heart and skeletal muscle.

The protein resides in the secreted. Its subcellular location is the extracellular space. The protein localises to the extracellular matrix. Functionally, structural protein that stabilizes microvessels and muscle cells, both in heart and in skeletal muscle. In terms of biological role, restin potently inhibits angiogenesis. The chain is Collagen alpha-1(XV) chain (Col15a1) from Mus musculus (Mouse).